Consider the following 513-residue polypeptide: Maturase K (513 aa).

The protein belongs to the intron maturase 2 family. MatK subfamily.

The protein localises to the plastid. It is found in the chloroplast. In terms of biological role, usually encoded in the trnK tRNA gene intron. Probably assists in splicing its own and other chloroplast group II introns. This is Maturase K from Astrebla lappacea (Curly Mitchell grass).